Here is a 532-residue protein sequence, read N- to C-terminus: MACLLRSFQRISAGVFFLALWGMVVGDKLLVVPQDGSHWLSMKDIVEVLSDRGHEIVVVVPEVNLLLKESKYYTRKIYPVPYDQEELKNRYQSFGNNHFAERSFLTAPQTEYRNNMIVIGLYFINCQSLLQDRDTLNFFKESKFDALFTDPALPCGVILAEYLGLPSVYLFRGFPCSLEHTFSRSPDPVSYIPRCYTKFSDHMTFSQRVANFLVNLLEPYLFYCLFSKYEELASAVLKRDVDIITLYQKVSVWLLRYDFVLEYPRPVMPNMVFIGGINCKKRKDLSQEFEAYINASGEHGIVVFSLGSMVSEIPEKKAMAIADALGKIPQTVLWRYTGTRPSNLANNTILVKWLPQNDLLGHPMTRAFITHAGSHGVYESICNGVPMVMMPLFGDQMDNAKRMETKGAGVTLNVLEMTSEDLENALKAVINDKSYKENIMRLSSLHKDRPVEPLDLAVFWVEFVMRHKGAPHLRPAAHDLTWYQYHSLDVIGFLLAVVLTVAFITFKCCAYGYRKCLGKKGRVKKAHKSKTH.

An N-terminal signal peptide occupies residues 1 to 26 (MACLLRSFQRISAGVFFLALWGMVVG). N-linked (GlcNAc...) asparagine glycosylation is found at Asn294 and Asn346. The helical transmembrane segment at 490-506 (VIGFLLAVVLTVAFITF) threads the bilayer.

This sequence belongs to the UDP-glycosyltransferase family. In terms of assembly, isoform 1 interacts with isoform 3/i2 suggesting that oligomerization is involved in negative regulation of transferase activity by isoform 3. Isoform 1 also interacts with respective i2 isoforms of UGT1A1, UGT1A3, UGT1A4, UGT1A7, UGT1A8, UGT1A9 and UGT1A10. As to expression, expressed in skin. Isoforms 1 and 3 are expressed in kidney and liver. Isoform 1 but not isoform 2 is expressed in colon, esophagus and small intestine.

The protein resides in the microsome. The protein localises to the endoplasmic reticulum membrane. The catalysed reaction is glucuronate acceptor + UDP-alpha-D-glucuronate = acceptor beta-D-glucuronoside + UDP + H(+). It catalyses the reaction (5Z,8Z,11Z,14Z)-eicosatetraenoate + UDP-alpha-D-glucuronate = O-[(5Z),(8Z),(11Z),(14Z)-eicosatetraenoyl]-beta-D-glucuronate + UDP. The enzyme catalyses 15-hydroxy-(5Z,8Z,11Z,13E)-eicosatetraenoate + UDP-alpha-D-glucuronate = 15-O-(beta-D-glucuronosyl)-(5Z,8Z,11Z,14Z)-eicosatetraenoate + UDP + H(+). It carries out the reaction (E)-ferulate + UDP-alpha-D-glucuronate = (E)-4-O-(beta-D-glucuronosyl)-ferulate + UDP + H(+). The catalysed reaction is (E)-ferulate + UDP-alpha-D-glucuronate = (E)-ferulic acid beta-D-glucuronate ester + UDP. Functionally, UDP-glucuronosyltransferase (UGT) that catalyzes phase II biotransformation reactions in which lipophilic substrates are conjugated with glucuronic acid to facilitate their inactivation and excretion from the body. Essential for the elimination and detoxification of drugs, xenobiotics and endogenous compounds. Involved in the glucuronidation of arachidonic acid (AA) and AA-derived eicosanoids including 15-HETE and 20-HETE. Conjugates small planar phenolic molecules such as 4-nitrophenol, 1-naphthol, and 4-methylumbelliferone. The bulky phenol 4-hydroxybiphenyl, androgens and estrogens are not substrates. 2-hydroxybiphenyl is an excellent substrate. Involved in the glucuronidation of the phytochemical ferulic acid at the phenolic or the carboxylic acid group. Isoform 3 lacks transferase activity but acts as a negative regulator of isoform 1. This chain is UDP-glucuronosyltransferase 1A6, found in Homo sapiens (Human).